Here is a 147-residue protein sequence, read N- to C-terminus: Hemoglobin subunit gamma-2 (147 aa).

A Globin domain is found at 3–147 (HFTEEDKATI…VASALSSRYH (145 aa)). Thr13 carries the post-translational modification Phosphothreonine. Phosphoserine occurs at positions 45, 51, and 53. Lys60 is modified (N6-acetyllysine). His64 provides a ligand contact to heme b. The residue at position 83 (Lys83) is an N6-acetyllysine. His93 lines the heme b pocket. The residue at position 94 (Cys94) is an S-nitrosocysteine. Ser140, Ser143, and Ser144 each carry phosphoserine.

This sequence belongs to the globin family. Heterotetramer of two alpha chains and two gamma chains in fetal hemoglobin (Hb F). In terms of tissue distribution, red blood cells.

Its function is as follows. Gamma chains make up the fetal hemoglobin F, in combination with alpha chains. The sequence is that of Hemoglobin subunit gamma-2 (HBG2) from Pongo pygmaeus (Bornean orangutan).